A 616-amino-acid polypeptide reads, in one-letter code: Electron transfer flavoprotein-ubiquinone oxidoreductase, mitochondrial (616 aa).

A mitochondrion-targeting transit peptide spans 1 to 32 (MLVRLTKLSCPAYQWFHALKIKKCLPLCAPRC). Position 70–84 (70–84 (VVIVGAGPAGLSAAI)) interacts with FAD. Residue Lys-95 is modified to N6-acetyllysine. Residues 108-129 (IGAHTLSGACLDPAAFKELFPD) lie within the membrane without spanning it. Residues Lys-131 and Lys-222 each carry the N6-acetyllysine modification. Residues Gly-304 and Gly-305 each contribute to the a ubiquinone site. Lys-356 and Lys-415 each carry N6-acetyllysine. Residues 427–446 (AGLHVTEYEDNLKQSWVWKE) lie within the membrane without spanning it. Position 550 is a phosphoserine (Ser-550). Positions 560, 585, 588, and 591 each coordinate [4Fe-4S] cluster. Residues 576-605 (FRLQINAQNCVHCKTCDIKDPSQNINWVVP) form the 4Fe-4S ferredoxin-type domain.

This sequence belongs to the ETF-QO/FixC family. In terms of assembly, monomer. [4Fe-4S] cluster serves as cofactor. It depends on FAD as a cofactor.

Its subcellular location is the mitochondrion inner membrane. The catalysed reaction is a ubiquinone + reduced [electron-transfer flavoprotein] = a ubiquinol + oxidized [electron-transfer flavoprotein] + H(+). Its function is as follows. Accepts electrons from ETF and reduces ubiquinone. This Rattus norvegicus (Rat) protein is Electron transfer flavoprotein-ubiquinone oxidoreductase, mitochondrial (Etfdh).